The chain runs to 86 residues: Small ribosomal subunit protein uS17 (86 aa).

It belongs to the universal ribosomal protein uS17 family. Part of the 30S ribosomal subunit.

Functionally, one of the primary rRNA binding proteins, it binds specifically to the 5'-end of 16S ribosomal RNA. This is Small ribosomal subunit protein uS17 from Marinomonas sp. (strain MWYL1).